The chain runs to 143 residues: UPF0299 membrane protein CGSHiEE_04225 (143 aa).

The next 4 membrane-spanning stretches (helical) occupy residues 1 to 21 (MIQK…MLSL), 33 to 52 (VPGS…TRVI), 60 to 80 (GASL…VGII), and 92 to 112 (ILLV…GFLG).

Belongs to the UPF0299 family.

The protein resides in the cell inner membrane. The sequence is that of UPF0299 membrane protein CGSHiEE_04225 from Haemophilus influenzae (strain PittEE).